A 244-amino-acid chain; its full sequence is MVELPFQQSQALNVRQNRALALAGVFQATQLTHMTAMTGQQSIGESGNFYFELLIKASLNIRPTTNNNTVQTLDFFNQLADISLGLKTLENCITQPFSNAPKSRLPKMRSAKLPMSYAMSLLQLEKKVYSNPEYVAIIEKAQQKILKQLSFFDNNYLHPSILANLAQTYVDTAGQINPRILVRGNAEAFKDTNHTNRIRACLFTGLQMAHLWRQLGGSSWNMIFSKRKLLQDIQALARLQYQVI.

The protein belongs to the HflD family.

Its subcellular location is the cytoplasm. The protein localises to the cell inner membrane. This is High frequency lysogenization protein HflD homolog from Acinetobacter baumannii (strain ATCC 17978 / DSM 105126 / CIP 53.77 / LMG 1025 / NCDC KC755 / 5377).